The sequence spans 102 residues: Small ribosomal subunit protein uS10 (102 aa).

Belongs to the universal ribosomal protein uS10 family. Part of the 30S ribosomal subunit.

Involved in the binding of tRNA to the ribosomes. The chain is Small ribosomal subunit protein uS10 from Leptospira biflexa serovar Patoc (strain Patoc 1 / Ames).